The following is a 537-amino-acid chain: T-complex protein 1 subunit theta (537 aa).

The protein belongs to the TCP-1 chaperonin family. In terms of assembly, heterooligomeric complex.

It localises to the cytoplasm. Molecular chaperone; assists the folding of proteins upon ATP hydrolysis. Known to play a role, in vitro, in the folding of actin and tubulin. In Dictyostelium discoideum (Social amoeba), this protein is T-complex protein 1 subunit theta (cct8).